The chain runs to 146 residues: Hemoglobin subunit beta (146 aa).

The residue at position 1 (Val-1) is an N-acetylvaline. One can recognise a Globin domain in the interval 2-146; that stretch reads HLTGEEKAAV…VATALAHKYH (145 aa). Thr-12 carries the phosphothreonine modification. The residue at position 44 (Ser-44) is a Phosphoserine. Lys-59 is subject to N6-acetyllysine. His-63 contributes to the heme b binding site. Lys-82 is modified (N6-acetyllysine). Heme b is bound at residue His-92. Cys-93 is subject to S-nitrosocysteine. The residue at position 144 (Lys-144) is an N6-acetyllysine.

Belongs to the globin family. Heterotetramer of two alpha chains and two beta chains. As to expression, red blood cells.

Involved in oxygen transport from the lung to the various peripheral tissues. The sequence is that of Hemoglobin subunit beta (HBB) from Macroderma gigas (Australian ghost bat).